The following is a 300-amino-acid chain: Diphthine methyl ester synthase (300 aa).

S-adenosyl-L-methionine-binding positions include leucine 9, aspartate 85, glycine 88, 113–114 (SV), and leucine 164. Serine 172 is subject to Phosphoserine. Positions 222 and 247 each coordinate S-adenosyl-L-methionine. The residue at position 298 (serine 298) is a Phosphoserine.

It belongs to the diphthine synthase family.

It is found in the cytoplasm. The enzyme catalyses 2-[(3S)-amino-3-carboxypropyl]-L-histidyl-[translation elongation factor 2] + 4 S-adenosyl-L-methionine = diphthine methyl ester-[translation elongation factor 2] + 4 S-adenosyl-L-homocysteine + 3 H(+). Its pathway is protein modification; peptidyl-diphthamide biosynthesis. Functionally, S-adenosyl-L-methionine-dependent methyltransferase that catalyzes four methylations of the modified target histidine residue in translation elongation factor 2 (EF-2), to form an intermediate called diphthine methyl ester. The four successive methylation reactions represent the second step of diphthamide biosynthesis. This Saccharomyces cerevisiae (strain ATCC 204508 / S288c) (Baker's yeast) protein is Diphthine methyl ester synthase (DPH5).